The sequence spans 408 residues: LL-diaminopimelate aminotransferase (408 aa).

Substrate contacts are provided by Tyr15 and Gly42. Pyridoxal 5'-phosphate is bound by residues Tyr72, 108-109 (SK), Tyr132, Asn187, Tyr218, and 246-248 (SFS). Substrate-binding residues include Lys109, Tyr132, and Asn187. N6-(pyridoxal phosphate)lysine is present on Lys249. Pyridoxal 5'-phosphate is bound by residues Arg257 and Asn292. 2 residues coordinate substrate: Asn292 and Arg388.

Belongs to the class-I pyridoxal-phosphate-dependent aminotransferase family. LL-diaminopimelate aminotransferase subfamily. As to quaternary structure, homodimer. It depends on pyridoxal 5'-phosphate as a cofactor.

It catalyses the reaction (2S,6S)-2,6-diaminopimelate + 2-oxoglutarate = (S)-2,3,4,5-tetrahydrodipicolinate + L-glutamate + H2O + H(+). It participates in amino-acid biosynthesis; L-lysine biosynthesis via DAP pathway; LL-2,6-diaminopimelate from (S)-tetrahydrodipicolinate (aminotransferase route): step 1/1. Its function is as follows. Involved in the synthesis of meso-diaminopimelate (m-DAP or DL-DAP), required for both lysine and peptidoglycan biosynthesis. Catalyzes the direct conversion of tetrahydrodipicolinate to LL-diaminopimelate. The chain is LL-diaminopimelate aminotransferase from Prochlorococcus marinus subsp. pastoris (strain CCMP1986 / NIES-2087 / MED4).